The sequence spans 144 residues: Snake venom vascular endothelial growth factor toxin VR-1 (144 aa).

The signal sequence occupies residues 1–24 (MAAYLLAVAILFCIQGWPSGTVQG). Position 25 is a pyrrolidone carboxylic acid (Gln25). 3 disulfides stabilise this stretch: Cys38–Cys80, Cys69–Cys115, and Cys73–Cys117. Over residues 120–134 (RWKQGEPEGPKEPRR) the composition is skewed to basic and acidic residues. A disordered region spans residues 120–144 (RWKQGEPEGPKEPRRGGVRAKFPFD). The propeptide occupies 134–144 (RGGVRAKFPFD).

Belongs to the PDGF/VEGF growth factor family. Snake venom VEGF subfamily. In terms of assembly, homodimer; disulfide-linked. Interacts with VEGF receptor-2 (KDR) with high affinity, but not with VEGF receptor-1 (Flt-1), VEGF receptor-3 (FLT4), and neuropilin-1 (NRP1). Expressed by the venom gland.

It is found in the secreted. Functionally, snake venom VEGFs may contribute to venom dispersion and prey subjugation by inducing vascular permeability and hypotension. This protein induces angiogenesis probably through VEGF receptor (KDR/VEGFR-2) signaling, as well as drastic hypotension. The hypotension is mediated by nitric oxide, which is produced by VEGF-activated endothelium NO synthase. May also induce vascular permeability. In Daboia russelii (Russel's viper), this protein is Snake venom vascular endothelial growth factor toxin VR-1.